A 422-amino-acid chain; its full sequence is Protein phosphatase 1 regulatory subunit 36 (422 aa).

As to quaternary structure, interacts with PPP1CA.

Its function is as follows. Inhibits phosphatase activity of protein phosphatase 1 (PP1) complexes. The sequence is that of Protein phosphatase 1 regulatory subunit 36 (PPP1R36) from Homo sapiens (Human).